The chain runs to 959 residues: Translation initiation factor IF-2 (959 aa).

Residues 1 to 10 (MSDKTNDDKT) are compositionally biased toward basic and acidic residues. Residues 1-374 (MSDKTNDDKT…SQMQETREKI (374 aa)) form a disordered region. Positions 27–37 (EQSTVRQNFSH) are enriched in polar residues. 2 stretches are compositionally biased toward low complexity: residues 63–118 (AAAA…VTKP) and 128–138 (QRPGGQQAQRP). Basic and acidic residues-rich tracts occupy residues 154–225 (SEMD…EAAK) and 232–241 (ARSERRDDAR). Residues 246-284 (GARPQQAGRPQGGRPQPAGRPQQGSPRPAPIIADAAPIA) show a composition bias toward low complexity. Residues 318-333 (PEVRAPKVVKGEDDRR) are compositionally biased toward basic and acidic residues. The tr-type G domain maps to 457–626 (SRPPVVTIMG…LLQAEMLDLK (170 aa)). Residues 466 to 473 (GHVDHGKT) are G1. 466–473 (GHVDHGKT) is a GTP binding site. Residues 491-495 (GITQH) form a G2 region. The G3 stretch occupies residues 512–515 (DTPG). GTP is bound by residues 512–516 (DTPGH) and 566–569 (NKID). Residues 566–569 (NKID) form a G4 region. Residues 602–604 (SAK) are G5.

This sequence belongs to the TRAFAC class translation factor GTPase superfamily. Classic translation factor GTPase family. IF-2 subfamily.

It localises to the cytoplasm. Its function is as follows. One of the essential components for the initiation of protein synthesis. Protects formylmethionyl-tRNA from spontaneous hydrolysis and promotes its binding to the 30S ribosomal subunits. Also involved in the hydrolysis of GTP during the formation of the 70S ribosomal complex. The protein is Translation initiation factor IF-2 of Brucella ovis (strain ATCC 25840 / 63/290 / NCTC 10512).